The chain runs to 155 residues: 6,7-dimethyl-8-ribityllumazine synthase (155 aa).

5-amino-6-(D-ribitylamino)uracil is bound by residues F22, 56 to 58 (AFE), and 80 to 82 (AVI). (2S)-2-hydroxy-3-oxobutyl phosphate is bound at residue 85-86 (AT). The active-site Proton donor is H88. F113 provides a ligand contact to 5-amino-6-(D-ribitylamino)uracil. A (2S)-2-hydroxy-3-oxobutyl phosphate-binding site is contributed by R127.

Belongs to the DMRL synthase family.

The enzyme catalyses (2S)-2-hydroxy-3-oxobutyl phosphate + 5-amino-6-(D-ribitylamino)uracil = 6,7-dimethyl-8-(1-D-ribityl)lumazine + phosphate + 2 H2O + H(+). It participates in cofactor biosynthesis; riboflavin biosynthesis; riboflavin from 2-hydroxy-3-oxobutyl phosphate and 5-amino-6-(D-ribitylamino)uracil: step 1/2. In terms of biological role, catalyzes the formation of 6,7-dimethyl-8-ribityllumazine by condensation of 5-amino-6-(D-ribitylamino)uracil with 3,4-dihydroxy-2-butanone 4-phosphate. This is the penultimate step in the biosynthesis of riboflavin. This Clostridium acetobutylicum (strain ATCC 824 / DSM 792 / JCM 1419 / IAM 19013 / LMG 5710 / NBRC 13948 / NRRL B-527 / VKM B-1787 / 2291 / W) protein is 6,7-dimethyl-8-ribityllumazine synthase.